A 289-amino-acid polypeptide reads, in one-letter code: Polyamine aminopropyltransferase (289 aa).

In terms of domain architecture, PABS spans 5–245 (PGPITLIEPL…YAVNFILGSL (241 aa)). Gln36 is an S-methyl-5'-thioadenosine binding site. The spermidine site is built by His67 and Glu91. S-methyl-5'-thioadenosine-binding positions include Asp111 and 143–144 (DG). Asp164 acts as the Proton acceptor in catalysis.

It belongs to the spermidine/spermine synthase family. Homodimer or homotetramer.

The protein resides in the cytoplasm. The catalysed reaction is S-adenosyl 3-(methylsulfanyl)propylamine + putrescine = S-methyl-5'-thioadenosine + spermidine + H(+). It functions in the pathway amine and polyamine biosynthesis; spermidine biosynthesis; spermidine from putrescine: step 1/1. In terms of biological role, catalyzes the irreversible transfer of a propylamine group from the amino donor S-adenosylmethioninamine (decarboxy-AdoMet) to putrescine (1,4-diaminobutane) to yield spermidine. This Pyrobaculum calidifontis (strain DSM 21063 / JCM 11548 / VA1) protein is Polyamine aminopropyltransferase.